A 316-amino-acid polypeptide reads, in one-letter code: Homoserine kinase (316 aa).

ATP is bound at residue 97-107 (PPARGLGSSAS).

The protein belongs to the GHMP kinase family. Homoserine kinase subfamily.

The protein localises to the cytoplasm. It catalyses the reaction L-homoserine + ATP = O-phospho-L-homoserine + ADP + H(+). The protein operates within amino-acid biosynthesis; L-threonine biosynthesis; L-threonine from L-aspartate: step 4/5. Its function is as follows. Catalyzes the ATP-dependent phosphorylation of L-homoserine to L-homoserine phosphate. In Prochlorococcus marinus (strain MIT 9303), this protein is Homoserine kinase.